The following is an 831-amino-acid chain: MNIPKYQQAQVQGQQPNLQAQQILLQQLQQGQSQQSQPSIGGSGSAGQFSQQDIYNDNIAQQGLYQNSYQRPVQAQQPPQLQNIHQQQQFFPQQFSSQQQNQPQASSLQQYQQQQQQQQQQQQQQQQQQQQQQQQQQQQQPQIHLPQQYQQSQGQQVPHQPPHIQQQQFFNQQAAALQQQQQQQQQQQQQQQQPAQKLNSINIENPNSIYWQHQQQLCQLSRNANIPHYYARQYAANSRKNKNPYSDVKTVSLIDATRSIVSALNEQENSKSNPGSATNSALLQNKKLAQDLDDDHLQEEQRMRQKTQGRQLWCQLDLSGQGLVNLSPKLFQYDFLESLYLNNNKLTSVPPIVNKLRSLRTLDLSHNRINEVPSELGMCFNLRYLYLFDNNIKTLPNEFGNLIELLFLGIEGNPIDLKIANLVAEKGTKELIAYLRDLKPSFSKPPPRQWLLLEDDGEIIDPINNPDAYTNDNNNSDTNDTFTMMSYNTLCQHYATTKMYKYTPSWALEWGFRRAALQEEVLHFKSDLVCMQEVETRTFHEFWVPVMQGFGYKGVFFNKTRSKTMSESDSKKVDGCATFYKTDKFELLHKQNFEYNSVCMGSDKYKKTKDLFNRFMNKDNIALITYFNHIQTGEKILFVNTHLHWDPAFNDVKTLQVGILLEELRTIMKKYHHTNSIDEIKNASMVICGDFNSTKENAVYQLFSTGAVSNHEDLEGRDYGKFTDEGFRHSFKLKSAYDHVGELPFTTISPAFTDAIDYIWYSTPTLQVKGLLGKIDEEYSSHCIGFPNAHFPSDHIPLVTKFQIKKSGGNKKPDFKPDFKPDFKSGSSRKT.

Disordered regions lie at residues 29–50 and 142–163; these read QQGQ…GQFS and QIHL…QPPH. 5 LRR repeats span residues 311–333, 335–356, 358–379, 381–402, and 404–426; these read QLWC…LFQY, FLES…VNKL, SLRT…LGMC, NLRY…FGNL, and ELLF…VAEK. Glutamate 533 contributes to the Mg(2+) binding site. The tract at residues 806 to 831 is disordered; the sequence is KSGGNKKPDFKPDFKPDFKSGSSRKT. The span at 811 to 823 shows a compositional bias: basic and acidic residues; that stretch reads KKPDFKPDFKPDF.

This sequence belongs to the CCR4/nocturin family. The cofactor is Mg(2+).

It is found in the cytoplasm. The protein localises to the nucleus. It carries out the reaction Exonucleolytic cleavage of poly(A) to 5'-AMP.. Functionally, acts as a catalytic component of the CCR4-NOT core complex, which in the nucleus seems to be a general transcription factor, and in the cytoplasm the major mRNA deadenylase involved in mRNA turnover. Ccr4 has 3'-5' RNase activity with a strong preference for polyadenylated substrates and also low exonuclease activity towards single-stranded DNA. This Debaryomyces hansenii (strain ATCC 36239 / CBS 767 / BCRC 21394 / JCM 1990 / NBRC 0083 / IGC 2968) (Yeast) protein is CCR4-Not complex 3'-5'-exoribonuclease subunit Ccr4 (CCR4).